The primary structure comprises 129 residues: Large ribosomal subunit protein bL17 (129 aa).

The protein belongs to the bacterial ribosomal protein bL17 family. Part of the 50S ribosomal subunit. Contacts protein L32.

In Serratia proteamaculans (strain 568), this protein is Large ribosomal subunit protein bL17.